Reading from the N-terminus, the 349-residue chain is Flavonol synthase/flavanone 3-hydroxylase (349 aa).

A Fe2OG dioxygenase domain is found at 213–310 (DIVYMLKINY…RMSWPVFLEP (98 aa)). 3 residues coordinate Fe cation: histidine 238, aspartate 240, and histidine 291.

It belongs to the iron/ascorbate-dependent oxidoreductase family. Requires Fe cation as cofactor. L-ascorbate serves as cofactor.

The protein localises to the cytoplasm. The enzyme catalyses a (2R,3R)-dihydroflavonol + 2-oxoglutarate + O2 = a flavonol + succinate + CO2 + H2O. The catalysed reaction is a (2S)-flavan-4-one + 2-oxoglutarate + O2 = a (2R,3R)-dihydroflavonol + succinate + CO2. The protein operates within secondary metabolite biosynthesis; flavonoid biosynthesis. Functionally, catalyzes the formation of flavonols from dihydroflavonols. It can act on dihydrokaempferol to produce kaempferol, on dihydroquercetin to produce quercitin and on dihydromyricetin to produce myricetin. The sequence is that of Flavonol synthase/flavanone 3-hydroxylase from Solanum tuberosum (Potato).